We begin with the raw amino-acid sequence, 510 residues long: Histidine ammonia-lyase (510 aa).

Positions 143–145 (ASG) form a cross-link, 5-imidazolinone (Ala-Gly). Residue serine 144 is modified to 2,3-didehydroalanine (Ser).

The protein belongs to the PAL/histidase family. Post-translationally, contains an active site 4-methylidene-imidazol-5-one (MIO), which is formed autocatalytically by cyclization and dehydration of residues Ala-Ser-Gly.

Its subcellular location is the cytoplasm. It carries out the reaction L-histidine = trans-urocanate + NH4(+). It participates in amino-acid degradation; L-histidine degradation into L-glutamate; N-formimidoyl-L-glutamate from L-histidine: step 1/3. The polypeptide is Histidine ammonia-lyase (Aliivibrio fischeri (strain ATCC 700601 / ES114) (Vibrio fischeri)).